The primary structure comprises 254 residues: Phosphatidylglycerol--prolipoprotein diacylglyceryl transferase (254 aa).

4 consecutive transmembrane segments (helical) span residues 11–31 (LAIRWYGVVISIGAALGLLLA), 49–69 (FLIAFPSAIIGARLYYVIFEF), 84–104 (QGGLAIHGGIIFGVLAVYIYL), and 109–129 (ESFFEYVDVAAPSIILGQAIG). Position 130 (R130) interacts with a 1,2-diacyl-sn-glycero-3-phospho-(1'-sn-glycerol). The next 3 helical transmembrane spans lie at 169–189 (PTFLYESIWNFIVCIFLVYLL), 196–216 (GIVFMAYIGLYSLGRFFIEGL), and 228–248 (VAQLISVLGIILSIFFIYNII).

The protein belongs to the Lgt family.

The protein localises to the cell membrane. The enzyme catalyses L-cysteinyl-[prolipoprotein] + a 1,2-diacyl-sn-glycero-3-phospho-(1'-sn-glycerol) = an S-1,2-diacyl-sn-glyceryl-L-cysteinyl-[prolipoprotein] + sn-glycerol 1-phosphate + H(+). It functions in the pathway protein modification; lipoprotein biosynthesis (diacylglyceryl transfer). Functionally, catalyzes the transfer of the diacylglyceryl group from phosphatidylglycerol to the sulfhydryl group of the N-terminal cysteine of a prolipoprotein, the first step in the formation of mature lipoproteins. In Clostridium botulinum (strain Langeland / NCTC 10281 / Type F), this protein is Phosphatidylglycerol--prolipoprotein diacylglyceryl transferase.